A 486-amino-acid chain; its full sequence is Protein DETOXIFICATION 27 (486 aa).

The tract at residues 1–25 (MRGGDGEEGSESRVALLKSPHTAEE) is disordered. Transmembrane regions (helical) follow at residues 41–61 (LWQI…MLVI), 74–94 (LAAI…LLLG), 124–144 (IVLF…TPVL), 153–173 (IAEL…AFTL), 189–209 (VTAY…WLFV), 216–236 (VVGT…ILLV), 269–289 (GVML…TGNL), 299–319 (LSIC…FFAG), 349–369 (IIGL…AWIF), 384–404 (LLLA…GVAV), 407–427 (GWQS…GVPL), and 439–461 (VMGI…LSFI).

Belongs to the multi antimicrobial extrusion (MATE) (TC 2.A.66.1) family.

The protein localises to the membrane. This chain is Protein DETOXIFICATION 27, found in Arabidopsis thaliana (Mouse-ear cress).